A 261-amino-acid polypeptide reads, in one-letter code: Cytochrome c oxidase subunit 3 (261 aa).

The Mitochondrial matrix portion of the chain corresponds to 1–15 (MTHQTHAYHMVNPSP). Residues 16–34 (WPLTGALSALLMTSGLIMW) form a helical membrane-spanning segment. At 35–40 (FHFNST) the chain is on the mitochondrial intermembrane side. The helical transmembrane segment at 41 to 66 (TLLMLGLTTNMLTMYQWWRDVIREST) threads the bilayer. Residues 67–72 (FQGHHT) are Mitochondrial matrix-facing. A helical transmembrane segment spans residues 73–105 (PNVQKGLRYGMILFIISEVLFFTGFFWAFYHSS). The Mitochondrial intermembrane portion of the chain corresponds to 106–128 (LAPTPELGGCWPPTGINPLNPLE). A helical membrane pass occupies residues 129–152 (VPLLNTSVLLASGVSITWAHHSLM). At 153–155 (EGN) the chain is on the mitochondrial matrix side. The chain crosses the membrane as a helical span at residues 156-183 (RNHMLQALFITIALGVYFTLLQASEYYE). Over 184–190 (APFTISD) the chain is Mitochondrial intermembrane. A helical transmembrane segment spans residues 191–223 (GVYGSTFFVATGFHGLHVIIGSTFLIVCFFRQL). Over 224–232 (KFHFTSNHH) the chain is Mitochondrial matrix. The chain crosses the membrane as a helical span at residues 233–256 (FGFEAAAWYWHFVDVVWLFLYVSI). Topologically, residues 257–261 (YWWGS) are mitochondrial intermembrane.

Belongs to the cytochrome c oxidase subunit 3 family. In terms of assembly, component of the cytochrome c oxidase (complex IV, CIV), a multisubunit enzyme composed of 14 subunits. The complex is composed of a catalytic core of 3 subunits MT-CO1, MT-CO2 and MT-CO3, encoded in the mitochondrial DNA, and 11 supernumerary subunits COX4I, COX5A, COX5B, COX6A, COX6B, COX6C, COX7A, COX7B, COX7C, COX8 and NDUFA4, which are encoded in the nuclear genome. The complex exists as a monomer or a dimer and forms supercomplexes (SCs) in the inner mitochondrial membrane with NADH-ubiquinone oxidoreductase (complex I, CI) and ubiquinol-cytochrome c oxidoreductase (cytochrome b-c1 complex, complex III, CIII), resulting in different assemblies (supercomplex SCI(1)III(2)IV(1) and megacomplex MCI(2)III(2)IV(2)).

It localises to the mitochondrion inner membrane. The enzyme catalyses 4 Fe(II)-[cytochrome c] + O2 + 8 H(+)(in) = 4 Fe(III)-[cytochrome c] + 2 H2O + 4 H(+)(out). In terms of biological role, component of the cytochrome c oxidase, the last enzyme in the mitochondrial electron transport chain which drives oxidative phosphorylation. The respiratory chain contains 3 multisubunit complexes succinate dehydrogenase (complex II, CII), ubiquinol-cytochrome c oxidoreductase (cytochrome b-c1 complex, complex III, CIII) and cytochrome c oxidase (complex IV, CIV), that cooperate to transfer electrons derived from NADH and succinate to molecular oxygen, creating an electrochemical gradient over the inner membrane that drives transmembrane transport and the ATP synthase. Cytochrome c oxidase is the component of the respiratory chain that catalyzes the reduction of oxygen to water. Electrons originating from reduced cytochrome c in the intermembrane space (IMS) are transferred via the dinuclear copper A center (CU(A)) of subunit 2 and heme A of subunit 1 to the active site in subunit 1, a binuclear center (BNC) formed by heme A3 and copper B (CU(B)). The BNC reduces molecular oxygen to 2 water molecules using 4 electrons from cytochrome c in the IMS and 4 protons from the mitochondrial matrix. This is Cytochrome c oxidase subunit 3 (MT-CO3) from Gazella subgutturosa (Goitred gazelle).